The following is a 597-amino-acid chain: Elongation factor 4 (597 aa).

The region spanning 4 to 181 (SKIRNFSIIA…EIVDKISYPI (178 aa)) is the tr-type G domain. Residues 16–21 (DHGKST) and 128–131 (NKID) contribute to the GTP site.

Belongs to the TRAFAC class translation factor GTPase superfamily. Classic translation factor GTPase family. LepA subfamily.

It is found in the cell membrane. The catalysed reaction is GTP + H2O = GDP + phosphate + H(+). In terms of biological role, required for accurate and efficient protein synthesis under certain stress conditions. May act as a fidelity factor of the translation reaction, by catalyzing a one-codon backward translocation of tRNAs on improperly translocated ribosomes. Back-translocation proceeds from a post-translocation (POST) complex to a pre-translocation (PRE) complex, thus giving elongation factor G a second chance to translocate the tRNAs correctly. Binds to ribosomes in a GTP-dependent manner. The polypeptide is Elongation factor 4 (Mycoplasmopsis pulmonis (strain UAB CTIP) (Mycoplasma pulmonis)).